Here is a 250-residue protein sequence, read N- to C-terminus: 23S rRNA (guanosine-2'-O-)-methyltransferase RlmB (250 aa).

Residues G197, I217, and M226 each contribute to the S-adenosyl-L-methionine site.

Belongs to the class IV-like SAM-binding methyltransferase superfamily. RNA methyltransferase TrmH family. RlmB subfamily.

It is found in the cytoplasm. It catalyses the reaction guanosine(2251) in 23S rRNA + S-adenosyl-L-methionine = 2'-O-methylguanosine(2251) in 23S rRNA + S-adenosyl-L-homocysteine + H(+). Its function is as follows. Specifically methylates the ribose of guanosine 2251 in 23S rRNA. This chain is 23S rRNA (guanosine-2'-O-)-methyltransferase RlmB, found in Neisseria meningitidis serogroup B (strain ATCC BAA-335 / MC58).